The chain runs to 148 residues: Endoribonuclease YbeY (148 aa).

His112, His116, and His122 together coordinate Zn(2+).

This sequence belongs to the endoribonuclease YbeY family. Zn(2+) serves as cofactor.

Its subcellular location is the cytoplasm. Functionally, single strand-specific metallo-endoribonuclease involved in late-stage 70S ribosome quality control and in maturation of the 3' terminus of the 16S rRNA. The protein is Endoribonuclease YbeY of Albidiferax ferrireducens (strain ATCC BAA-621 / DSM 15236 / T118) (Rhodoferax ferrireducens).